Reading from the N-terminus, the 201-residue chain is Recombination protein RecR (201 aa).

The C4-type zinc finger occupies Cys57–Cys72. A Toprim domain is found at Gly81–Pro176.

It belongs to the RecR family.

Functionally, may play a role in DNA repair. It seems to be involved in an RecBC-independent recombinational process of DNA repair. It may act with RecF and RecO. The polypeptide is Recombination protein RecR (Histophilus somni (strain 2336) (Haemophilus somnus)).